A 629-amino-acid polypeptide reads, in one-letter code: tRNA uridine 5-carboxymethylaminomethyl modification enzyme MnmG (629 aa).

Residues 14–19, valine 126, and serine 181 each bind FAD; that span reads GAGHAG. 273–287 is a binding site for NAD(+); that stretch reads GPRYCPSIEDKVVRF. Glutamine 370 serves as a coordination point for FAD.

It belongs to the MnmG family. As to quaternary structure, homodimer. Heterotetramer of two MnmE and two MnmG subunits. It depends on FAD as a cofactor.

It localises to the cytoplasm. Its function is as follows. NAD-binding protein involved in the addition of a carboxymethylaminomethyl (cmnm) group at the wobble position (U34) of certain tRNAs, forming tRNA-cmnm(5)s(2)U34. The protein is tRNA uridine 5-carboxymethylaminomethyl modification enzyme MnmG of Bacillus cereus (strain ATCC 10987 / NRS 248).